Consider the following 189-residue polypeptide: GTP cyclohydrolase 1 (189 aa).

3 residues coordinate Zn(2+): C78, H81, and C150.

It belongs to the GTP cyclohydrolase I family. As to quaternary structure, toroid-shaped homodecamer, composed of two pentamers of five dimers.

The catalysed reaction is GTP + H2O = 7,8-dihydroneopterin 3'-triphosphate + formate + H(+). It functions in the pathway cofactor biosynthesis; 7,8-dihydroneopterin triphosphate biosynthesis; 7,8-dihydroneopterin triphosphate from GTP: step 1/1. The protein is GTP cyclohydrolase 1 of Listeria welshimeri serovar 6b (strain ATCC 35897 / DSM 20650 / CCUG 15529 / CIP 8149 / NCTC 11857 / SLCC 5334 / V8).